Here is a 523-residue protein sequence, read N- to C-terminus: 2-isopropylmalate synthase (523 aa).

One can recognise a Pyruvate carboxyltransferase domain in the interval 5 to 267 (VIIFDTTLRD…HTRINHQEIW (263 aa)). Residues D14, H202, H204, and N238 each contribute to the Mn(2+) site. A regulatory domain region spans residues 392–523 (RLDYFSVQSG…QNKENNKETV (132 aa)).

This sequence belongs to the alpha-IPM synthase/homocitrate synthase family. LeuA type 1 subfamily. In terms of assembly, homodimer. Mn(2+) serves as cofactor.

Its subcellular location is the cytoplasm. The enzyme catalyses 3-methyl-2-oxobutanoate + acetyl-CoA + H2O = (2S)-2-isopropylmalate + CoA + H(+). The protein operates within amino-acid biosynthesis; L-leucine biosynthesis; L-leucine from 3-methyl-2-oxobutanoate: step 1/4. In terms of biological role, catalyzes the condensation of the acetyl group of acetyl-CoA with 3-methyl-2-oxobutanoate (2-ketoisovalerate) to form 3-carboxy-3-hydroxy-4-methylpentanoate (2-isopropylmalate). The chain is 2-isopropylmalate synthase from Citrobacter koseri (strain ATCC BAA-895 / CDC 4225-83 / SGSC4696).